The following is a 761-amino-acid chain: Nitrogen fixation protein FixI (761 aa).

The Cytoplasmic segment spans residues 1–120; it reads MSCCTMDAES…SAPESDKTRN (120 aa). One can recognise an HMA domain in the interval 36–106; the sequence is RQLDLSVSDV…EINSAGYRAH (71 aa). Residues C47 and C50 each coordinate a metal cation. The chain crosses the membrane as a helical span at residues 121-142; sequence QLLLAIGVSGFAAPNIMLLSVS. At 143–155 the chain is on the extracellular side; sequence VWSGADAATRDMF. A helical membrane pass occupies residues 156–177; that stretch reads HWISAMIAAPALVYAGRFFFKS. At 178–184 the chain is on the cytoplasmic side; the sequence is AWNALRH. The chain crosses the membrane as a helical span at residues 185–205; it reads GRTNMDVPISVTVSLSYAVSL. Over 206 to 217 the chain is Extracellular; the sequence is WETVHHGEHAWF. The helical transmembrane segment at 218–238 threads the bilayer; that stretch reads DASVSLLFFLLIGRTLDHIMR. Topologically, residues 239 to 367 are cytoplasmic; that stretch reads EKARAAINGL…RARYRRIADR (129 aa). A helical membrane pass occupies residues 368–390; it reads AATLYSPVVHLLALVSFLAWGFL. Residues 391 to 395 lie on the Extracellular side of the membrane; it reads GGDWK. Residues 396-415 form a helical membrane-spanning segment; that stretch reads QAMLVAVAVLIITCPCALGL. The Cytoplasmic portion of the chain corresponds to 416 to 691; it reads AVPVVQVVAA…AVARRSASLI (276 aa). The active-site 4-aspartylphosphate intermediate is D453. Residues D637 and D641 each contribute to the Mg(2+) site. Residues 692–711 form a helical membrane-spanning segment; that stretch reads RQNFALAIGYNVLAVPIAIA. Residues 712–716 lie on the Extracellular side of the membrane; sequence GLATP. A helical membrane pass occupies residues 717 to 735; the sequence is LIAAVAMSTSSIIVVTNAL. Residues 736-761 lie on the Cytoplasmic side of the membrane; it reads RLNGFGKRPDMHIRRGIGRSAEVKAA.

The protein belongs to the cation transport ATPase (P-type) (TC 3.A.3) family. Type IB subfamily.

The protein resides in the cell membrane. It carries out the reaction ATP + H2O = ADP + phosphate + H(+). Functionally, fixI is a pump of a specific cation involved in symbiotic nitrogen fixation. The four proteins FixG, FixH, FixI, and FixS may participate in a membrane-bound complex coupling the FixI cation pump with a redox process catalyzed by FixG. This Rhizobium leguminosarum bv. viciae protein is Nitrogen fixation protein FixI (fixI).